The chain runs to 217 residues: Eukaryotic translation initiation factor 4E (217 aa).

The interval 1–30 (MATVEPETTPTPNPPTTEEEKTESNQEVAN) is disordered. At Ala-2 the chain carries N-acetylalanine. Thr-22 carries the post-translational modification Phosphothreonine. The interval 37-40 (HPLQ) is EIF4EBP1/2/3 binding. Residue 56–57 (WQ) coordinates mRNA. The interval 73–77 (WALYN) is EIF4EBP1/2/3 binding. 102-103 (WE) is an mRNA binding site. Positions 132 to 139 (ETLLCLIG) are EIF4EBP1/2/3 binding. Residues 157–162 (RAKGDK) and 205–207 (TKS) each bind mRNA. Ser-209 bears the Phosphoserine; by PKC and MKNK2 mark.

The protein belongs to the eukaryotic initiation factor 4E family. In terms of assembly, eIF4F is a multi-subunit complex, the composition of which varies with external and internal environmental conditions. It is composed of at least EIF4A, EIF4E and EIF4G1/EIF4G3. EIF4E is also known to interact with other partners. Interacts with EIF4ENIF1/4E-T; promotes recruitment to P-bodies and import into the nucleus. Hypophosphorylated EIF4EBP1, EIF4EBP2 and EIF4EBP3 compete with EIF4G1/EIF4G3 to interact with EIF4E; insulin stimulated MAP-kinase (MAPK1 and MAPK3) phosphorylation of EIF4EBP1 causes dissociation of the complex allowing EIF4G1/EIF4G3 to bind and consequent initiation of translation. Interacts mutually exclusive with EIF4A1 or EIF4A2. Interacts with NGDN and PIWIL2. Component of the CYFIP1-EIF4E-FMR1 complex composed of CYFIP, EIF4E and FMR1. Interacts directly with CYFIP1. Interacts with CLOCK. Binds to MKNK2 in nucleus. Interacts with LIMD1, WTIP and AJUBA. Interacts with APOBEC3G in an RNA-dependent manner. Interacts with LARP1. Interacts with METTL3. Interacts with RBM24; this interaction prevents EIF4E from binding to p53/TP53 mRNA and inhibits the assembly of translation initiation complex. Interacts with DDX3X; interaction is direct and in an RNA-independent manner; this interaction enhances EIF4E cap-binding ability and is required for the repression of cap-dependent translation and the increase of IRES-mediated translation. DDX3X competes with EIF4G1 for interaction with EIF4E. Interacts with EIF4G1; which in a mutual exclusive interaction associates either with EIF1 or with EIF4E on a common binding site. Interacts with BTG4 and CNOT7. Interacts with LRPPRC (via N-terminus); the interaction promotes association of EIF4E with 4ESE-containing mRNAs. Interacts with mRNA cleavage enzyme CPSF3 and its cofactor CPSF1. Interacts (via RING-type zinc finger) with PML; the interaction results in conformational changes of both interacting proteins and reduces EIF4E affinity for the 5' m7G cap of mRNA, thus reducing EIF4E-mediated mRNA nuclear export. Interacts with homeobox protein HHEX/PRH; the interaction inhibits EIF4E-mediated mRNA nuclear export. Interacts with homeobox protein HOXA9; the interaction positively regulates EIF4E-mediated mRNA nuclear export. Interacts with homeobox protein EMX2. As to quaternary structure, (Microbial infection) Interacts with Lassa virus Z protein. (Microbial infection) Interacts with Lymphocytic choriomeningitis virus (LCMV) Z protein (via RING-type zinc finger); the interaction results in conformational changes of both interacting proteins and reduces EIF4E affinity for the m7G mRNA cap structure. In terms of assembly, (Microbial infection) Interacts (via cap-binding region) with potato virus Y VPg; this interaction mediates the translation of the VPg-viral RNA conjugates and interferes with the cellular EIF4E-dependent mRNA export and translation. In terms of processing, phosphorylation increases the ability of the protein to bind to mRNA caps and to form the eIF4F complex. Phosphorylation also enhances its mRNA transport function. Phosphorylation at Ser-209 is not essential for protein synthesis.

Its subcellular location is the cytoplasm. The protein resides in the P-body. It is found in the stress granule. It localises to the nucleus. The protein localises to the nucleus speckle. Its subcellular location is the nuclear body. Its function is as follows. Acts in the cytoplasm to initiate and regulate protein synthesis and is required in the nucleus for export of a subset of mRNAs from the nucleus to the cytoplasm which promotes processes such as RNA capping, processing and splicing. Component of the protein complex eIF4F, which is involved in the recognition of the mRNA cap, ATP-dependent unwinding of 5'-terminal secondary structure and recruitment of mRNA to the ribosome. This protein recognizes and binds the 7-methylguanosine (m7G)-containing mRNA cap during an early step in the initiation of protein synthesis and facilitates ribosome binding by inducing the unwinding of the mRNAs secondary structures. Together with EIF4G1, antagonizes the scanning promoted by EIF1-EIF4G1 and is required for TISU translation, a process where the TISU element recognition makes scanning unnecessary. In addition to its role in translation initiation, also acts as a regulator of translation and stability in the cytoplasm. Component of the CYFIP1-EIF4E-FMR1 complex which binds to the mRNA cap and mediates translational repression: in the complex, EIF4E mediates the binding to the mRNA cap. Component of a multiprotein complex that sequesters and represses translation of proneurogenic factors during neurogenesis. In P-bodies, component of a complex that mediates the storage of translationally inactive mRNAs in the cytoplasm and prevents their degradation. May play an important role in spermatogenesis through translational regulation of stage-specific mRNAs during germ cell development. As well as its roles in translation, also involved in mRNA nucleocytoplasmic transport. Its role in mRNA export from the nucleus to the cytoplasm relies on its ability to bind the m7G cap of RNAs and on the presence of the 50-nucleotide EIF4E sensitivity element (4ESE) in the 3'UTR of sensitive transcripts. Interaction with the 4ESE is mediated by LRPPRC which binds simultaneously to both EIF4E and the 4ESE, thereby acting as a platform for assembly for the RNA export complex. EIF4E-dependent mRNA export is independent of ongoing protein or RNA synthesis and is also NFX1-independent but is XPO1-dependent with LRPPRC interacting with XPO1 to form an EIF4E-dependent mRNA export complex. Alters the composition of the cytoplasmic face of the nuclear pore to promote RNA export by reducing RANBP2 expression, relocalizing nucleoporin NUP214 and increasing expression of RANBP1 and RNA export factors DDX19 and GLE1. Promotes the nuclear export of cyclin CCND1 mRNA. Promotes the nuclear export of NOS2/iNOS mRNA. Promotes the nuclear export of MDM2 mRNA. Promotes the export of additional mRNAs, including others involved in the cell cycle. In the nucleus, binds to capped splice factor-encoding mRNAs and stimulates their nuclear export to enhance splice factor production by increasing their cytoplasmic availability to the translation machinery. May also regulate splicing through interaction with the spliceosome in an RNA and m7G cap-dependent manner. Also binds to some pre-mRNAs and may play a role in their recruitment to the spliceosome. Promotes steady-state capping of a subset of coding and non-coding RNAs by mediating nuclear export of capping machinery mRNAs including RNMT, RNGTT and RAMAC to enhance their translation. Stimulates mRNA 3'-end processing by promoting the expression of several core cleavage complex factors required for mRNA cleavage and polyadenylation, and may also have a direct effect through its interaction with the CPSF3 cleavage enzyme. Rescues cells from apoptosis by promoting activation of serine/threonine-protein kinase AKT1 through mRNA export of NBS1 which potentiates AKT1 phosphorylation and also through mRNA export of AKT1 effectors, allowing for increased production of these proteins. The sequence is that of Eukaryotic translation initiation factor 4E from Homo sapiens (Human).